Reading from the N-terminus, the 430-residue chain is 3-phosphoshikimate 1-carboxyvinyltransferase (430 aa).

The 3-phosphoshikimate site is built by Lys-23, Ser-24, and Arg-28. Position 23 (Lys-23) interacts with phosphoenolpyruvate. 2 residues coordinate phosphoenolpyruvate: Gly-95 and Arg-123. 3-phosphoshikimate-binding residues include Ser-169, Gln-171, Asp-315, and Lys-342. Phosphoenolpyruvate is bound at residue Gln-171. Catalysis depends on Asp-315, which acts as the Proton acceptor. Phosphoenolpyruvate contacts are provided by Arg-346 and Arg-388.

Belongs to the EPSP synthase family. As to quaternary structure, monomer.

It is found in the cytoplasm. It catalyses the reaction 3-phosphoshikimate + phosphoenolpyruvate = 5-O-(1-carboxyvinyl)-3-phosphoshikimate + phosphate. Its pathway is metabolic intermediate biosynthesis; chorismate biosynthesis; chorismate from D-erythrose 4-phosphate and phosphoenolpyruvate: step 6/7. In terms of biological role, catalyzes the transfer of the enolpyruvyl moiety of phosphoenolpyruvate (PEP) to the 5-hydroxyl of shikimate-3-phosphate (S3P) to produce enolpyruvyl shikimate-3-phosphate and inorganic phosphate. This is 3-phosphoshikimate 1-carboxyvinyltransferase from Streptococcus pyogenes serotype M2 (strain MGAS10270).